The primary structure comprises 953 residues: Valine--tRNA ligase (953 aa).

The 'HIGH' region signature appears at 42 to 52; sequence PNVTGSLHMGH. A 'KMSKS' region motif is present at residues 554–558; sequence KMSKS. Residue K557 coordinates ATP. Residues 884–953 adopt a coiled-coil conformation; sequence LIDKDAELAR…EAQKETIAAL (70 aa).

It belongs to the class-I aminoacyl-tRNA synthetase family. ValS type 1 subfamily. In terms of assembly, monomer.

The protein localises to the cytoplasm. It catalyses the reaction tRNA(Val) + L-valine + ATP = L-valyl-tRNA(Val) + AMP + diphosphate. Its function is as follows. Catalyzes the attachment of valine to tRNA(Val). As ValRS can inadvertently accommodate and process structurally similar amino acids such as threonine, to avoid such errors, it has a 'posttransfer' editing activity that hydrolyzes mischarged Thr-tRNA(Val) in a tRNA-dependent manner. This Photobacterium profundum (strain SS9) protein is Valine--tRNA ligase.